The sequence spans 337 residues: Anthranilate phosphoribosyltransferase (337 aa).

5-phospho-alpha-D-ribose 1-diphosphate is bound by residues Gly81, 84–85 (GD), Ser89, 91–94 (NVST), 109–117 (KHGNRAATS), and Ala121. An anthranilate-binding site is contributed by Gly81. Ser93 is a Mg(2+) binding site. Asn112 contacts anthranilate. Arg167 is a binding site for anthranilate. Mg(2+)-binding residues include Asp226 and Glu227.

This sequence belongs to the anthranilate phosphoribosyltransferase family. Homodimer. Mg(2+) is required as a cofactor.

It carries out the reaction N-(5-phospho-beta-D-ribosyl)anthranilate + diphosphate = 5-phospho-alpha-D-ribose 1-diphosphate + anthranilate. Its pathway is amino-acid biosynthesis; L-tryptophan biosynthesis; L-tryptophan from chorismate: step 2/5. In terms of biological role, catalyzes the transfer of the phosphoribosyl group of 5-phosphorylribose-1-pyrophosphate (PRPP) to anthranilate to yield N-(5'-phosphoribosyl)-anthranilate (PRA). In Methylorubrum extorquens (strain CM4 / NCIMB 13688) (Methylobacterium extorquens), this protein is Anthranilate phosphoribosyltransferase.